A 609-amino-acid chain; its full sequence is MRLLLIHSDYIEYEAQKKTKMAEADPVPKDGMTEALTVFTAVEAVDEEDIDDVVAQSVAEIEKTATQLAVKNLLIYPYAHLSSDLSSPEAAVAALSAIERRLNETGRYEVKRAPFGWYKKFKLSCKGHPLSELSKTIVPGAGAAVKEKKEVTHEFFVMTPDGERHETGEFLEGRFGALVKKEIGIAEPVGGEPIHVDLMRSKELVDYEPASDVGNLRWLPRGKIVRDLLADYVLHMVLEYGGSPVETPVMYDLGDKAIYEHADKFGERQYRFKSGNRNMMLRFAACFGMFSIMRDMHISPNTLPIKMYELSTYSFRHEQRGEVIGLKRLRAFTMPDMHSLCLDMEGALHCFEEQLRLGWKSGEDFETELVGVFRCTRGFYEKYENWVKSIVAESRVPMLIEILSDRVHYWIAKVDLAAIDGQGRPIENPTVQIDVESSTRFDIKYHLDGEVVHPPILHCSPTGSIERVICALLENTANQSVPQLPAWLAPTQVRLIPVAERHTSFADELCTRLNKAQIRTDLDDREESVGKKVREAGMDWVPYVIVIGDAEMETGKLTVTIRKLSEPRVPHKEQLDVEELITLVRTSTDGMPFRPLYTTRNLSKKPRYI.

Residues 1 to 145 (MRLLLIHSDY…TIVPGAGAAV (145 aa)) form an editing domain region. The segment at 194 to 485 (IHVDLMRSKE…TANQSVPQLP (292 aa)) is catalytic. Zn(2+)-binding residues include Cys286, His338, and His458.

This sequence belongs to the class-II aminoacyl-tRNA synthetase family. Homodimer. Zn(2+) serves as cofactor.

The protein localises to the cytoplasm. It carries out the reaction tRNA(Thr) + L-threonine + ATP = L-threonyl-tRNA(Thr) + AMP + diphosphate + H(+). Catalyzes the attachment of threonine to tRNA(Thr) in a two-step reaction: L-threonine is first activated by ATP to form Thr-AMP and then transferred to the acceptor end of tRNA(Thr). Also edits incorrectly charged L-seryl-tRNA(Thr). The polypeptide is Threonine--tRNA ligase (Methanosphaerula palustris (strain ATCC BAA-1556 / DSM 19958 / E1-9c)).